The following is a 154-amino-acid chain: Terephthalate 1,2-dioxygenase, terminal oxygenase component subunit beta 2 (154 aa).

This sequence belongs to the bacterial ring-hydroxylating dioxygenase beta subunit family. Heterotetramer composed of 2 alpha (TphA2I and TphA2II) and 2 beta (TphA3I and TphA3II) subunits. Part of a multicomponent enzyme system composed of a reductase (TphA1I or TphA1II) and a two-subunit oxygenase component (TphA2I or TphA2II and TphA3I or TphA3II). Fe cation is required as a cofactor.

It catalyses the reaction terephthalate + NADH + O2 + H(+) = (3S,4R)-3,4-dihydroxycyclohexa-1,5-diene-1,4-dicarboxylate + NAD(+). Its activity is regulated as follows. Inhibited by EDTA. Functionally, component of the terephthalate 1,2-dioxygenase multicomponent enzyme system which catalyzes the dioxygenation of terephthalate (TER/TPA) to 1,2-dihydroxy-3,5-cyclohexadiene-1,4-dicarboxylic acid (DCD). It can also use 2,5-dicarboxypyridine (PDC) and 1,4-napthalenedicarboxylic acid (NDC) as substrates, and preferentially uses NADPH which is the physiological electron donor. The sequence is that of Terephthalate 1,2-dioxygenase, terminal oxygenase component subunit beta 2 (tphA3II) from Comamonas sp.